Here is a 354-residue protein sequence, read N- to C-terminus: Uroporphyrinogen decarboxylase (354 aa).

Residues 27–31 (RQAGR), phenylalanine 46, aspartate 77, tyrosine 154, serine 209, and histidine 327 contribute to the substrate site.

It belongs to the uroporphyrinogen decarboxylase family. Homodimer.

The protein resides in the cytoplasm. The enzyme catalyses uroporphyrinogen III + 4 H(+) = coproporphyrinogen III + 4 CO2. It functions in the pathway porphyrin-containing compound metabolism; protoporphyrin-IX biosynthesis; coproporphyrinogen-III from 5-aminolevulinate: step 4/4. In terms of biological role, catalyzes the decarboxylation of four acetate groups of uroporphyrinogen-III to yield coproporphyrinogen-III. The polypeptide is Uroporphyrinogen decarboxylase (Shewanella oneidensis (strain ATCC 700550 / JCM 31522 / CIP 106686 / LMG 19005 / NCIMB 14063 / MR-1)).